A 358-amino-acid polypeptide reads, in one-letter code: MISFNNNYRKLRKAIINEDIEEIKYIIEKDPNMIVKVDNNNHTLLHIAIMYRKVNAVKVLLDKGDNLVYVINSFPILPPLYCAIIGFCKLTRRNKISNALEKINNHKKIIEALVDKGVELTGLEIALSCKNIWLIKFLIEKGISVEYTGFFPVGVNYNTIDIDICKVLLENKIDINKPVCGETLVRYAIRSSDLNLLKYLISKGADIEKRNKYEQDPNIIEAVEKGNLGIVEYLIDNGISIDTVSIYNHKPAIYYAILAGHYNMVDLLLRRGANPFITCEGNTSLISVATQAKRNRLKLINLLLKYGVRLPGDHDYYIQPILLDYSYETYNIIHILLEHGLRITSNTTLVSTFLIIRV.

ANK repeat units lie at residues 6–35 (NNYR…NMIV), 40–69 (NNHT…NLVY), 91–118 (TRRN…DKGV), 119–147 (ELTG…SVEY), 149–177 (GFFP…DINK), 180–209 (CGET…DIEK), 214–243 (EQDP…SIDT), 248–277 (NHKP…NPFI), 280–312 (EGNT…RLPG), and 316–345 (YYIQ…RITS).

The protein is Putative ankyrin repeat protein FPV242 of Fowlpox virus (strain NVSL) (FPV).